A 243-amino-acid chain; its full sequence is Probable transcriptional regulatory protein Patl_0550 (243 aa).

The protein belongs to the TACO1 family.

It localises to the cytoplasm. The protein is Probable transcriptional regulatory protein Patl_0550 of Pseudoalteromonas atlantica (strain T6c / ATCC BAA-1087).